Reading from the N-terminus, the 166-residue chain is Endoribonuclease YbeY (166 aa).

Residues His132, His136, and His142 each coordinate Zn(2+).

This sequence belongs to the endoribonuclease YbeY family. Zn(2+) serves as cofactor.

Its subcellular location is the cytoplasm. Single strand-specific metallo-endoribonuclease involved in late-stage 70S ribosome quality control and in maturation of the 3' terminus of the 16S rRNA. This chain is Endoribonuclease YbeY, found in Clostridium botulinum (strain Eklund 17B / Type B).